Reading from the N-terminus, the 504-residue chain is 6,7,8-trihydroxycoumarin synthase (504 aa).

The chain crosses the membrane as a helical span at residues 1–21 (MEPVFLFLILAFPIASVYLLF). The tract at residues 363–368 (PAPVLV) is substrate specificity. Cys444 contributes to the heme binding site.

Belongs to the cytochrome P450 family. Heme is required as a cofactor.

The protein resides in the microsome membrane. Its pathway is secondary metabolite biosynthesis. Functionally, involved in the biosynthesis of coumarins and furanocoumarins (FCs), natural products required for defense responses against attacks by predators with potential medical and agroindustrial usages such as anticoagulant, rodenticide and artificial vanilla substitutes. Able to catalyze the hydroxylation of esculetin to produce 6,7,8-trihydroxycoumarin. The sequence is that of 6,7,8-trihydroxycoumarin synthase from Pastinaca sativa (Wild parsnip).